A 448-amino-acid polypeptide reads, in one-letter code: Vitamin D3 receptor (448 aa).

Positions 41-116 form a DNA-binding region, nuclear receptor; sequence PRICGVCGDR…IGMMKEFILT (76 aa). Positions 44, 47, 61, 64, 80, 86, 96, and 99 each coordinate Zn(2+). NR C4-type zinc fingers lie at residues 44 to 64 and 80 to 104; these read CGVCGDRATGFHFNAMTCEGC and CPFSGDCKITKDNRRHCQACRLKRC. Residues 117-146 form a hinge region; sequence DEEVQRKREMILKRKEEEALKESLKPKLSE. The NR LBD domain occupies 147–444; that stretch reads EQQKVINILL…LTPLVLEVFG (298 aa). S258 provides a ligand contact to calcitriol. The interval 267 to 285 is interaction with coactivator LXXLL motif; sequence KMIPGFRDLTAEDQIALLK. Calcitriol contacts are provided by R295, S299, H326, and H418. A 9aaTAD motif is present at residues 437–445; it reads PLVLEVFGN.

Belongs to the nuclear hormone receptor family. NR1 subfamily. Homodimer in the absence of bound vitamin D3. Heterodimer with RXRA after vitamin D3 binding.

The protein localises to the nucleus. The protein resides in the cytoplasm. Its function is as follows. Nuclear receptor for calcitriol, the active form of vitamin D3 which mediates the action of this vitamin on cells. Enters the nucleus upon vitamin D3 binding where it forms heterodimers with the retinoid X receptor/RXR. The VDR-RXR heterodimers bind to specific response elements on DNA and activate the transcription of vitamin D3-responsive target genes. Plays a central role in calcium homeostasis. Also functions as a receptor for the secondary bile acid lithocholic acid (LCA) and its metabolites. In Coturnix japonica (Japanese quail), this protein is Vitamin D3 receptor (VDR).